The following is a 139-amino-acid chain: uncharacterized protein (139 aa).

The VOC domain occupies 9–133; sequence QAAQIRIARP…DGWRIVFMNS (125 aa).

This is an uncharacterized protein from Bacillus subtilis (strain 168).